We begin with the raw amino-acid sequence, 586 residues long: Estrogen receptor (586 aa).

The segment at 1 to 179 is modulating; sequence MTMPLPNKTT…SMESTKETRY (179 aa). Positions 144 to 173 are disordered; that stretch reads FYRSSSDNRRQSGRERMSSANDKGPPSMES. A compositionally biased stretch (basic and acidic residues) spans 149–160; sequence SDNRRQSGRERM. NR C4-type zinc fingers lie at residues 180–200 and 216–240; these read CAVCSDYASGYHYGVWSCEGC and CPATNQCTIDKNRRKSCQACRLRKC. Positions 180–245 form a DNA-binding region, nuclear receptor; sequence CAVCSDYASG…RLRKCYEVGM (66 aa). The tract at residues 246-302 is hinge; sequence MKGGIRKDRRGGRLLKHKRQKEEQEQKNDVDPSEIRTASIWVNPSVKSMKLSPVLSL. Basic residues predominate over residues 252–264; that stretch reads KDRRGGRLLKHKR. Residues 252–276 are disordered; that stretch reads KDRRGGRLLKHKRQKEEQEQKNDVD. A compositionally biased stretch (basic and acidic residues) spans 265–276; it reads QKEEQEQKNDVD. The region spanning 303–539 is the NR LBD domain; the sequence is TAEQLISALM…DLLLEMLDAH (237 aa). Basic and acidic residues predominate over residues 543–556; that stretch reads TPKDKTTTQEEDSR. A disordered region spans residues 543–569; the sequence is TPKDKTTTQEEDSRSPPTTTVNGASPC.

It belongs to the nuclear hormone receptor family. NR3 subfamily. Binds DNA as a homodimer. Can form a heterodimer with ER-beta.

The protein resides in the nucleus. The steroid hormones and their receptors are involved in the regulation of eukaryotic gene expression and affect cellular proliferation and differentiation in target tissues. In Xenopus laevis (African clawed frog), this protein is Estrogen receptor (esr1).